Reading from the N-terminus, the 569-residue chain is Dicarboxylate transporter 1, chloroplastic (569 aa).

The transit peptide at 1–93 (MASMALSLTS…VPSPAPVSAP (93 aa)) directs the protein to the chloroplast. Low complexity predominate over residues 23–74 (SLKPLSKSQPSISLPSLRSNASKSPSLSHKHFLSPPSLLLPHKLKPISASSP). The tract at residues 23 to 93 (SLKPLSKSQP…VPSPAPVSAP (71 aa)) is disordered. Over residues 75–90 (TNPPPPPAPVPSPAPV) the composition is skewed to pro residues. 12 helical membrane-spanning segments follow: residues 106–126 (PLLASILTGVIIWFIPTPEGV), 134–154 (LAIFLSTIVGIITQPLPLGAV), 172–192 (AAFSAFGDPIPWLIALAFFFA), 241–261 (AGGIFLPLVKSLCIACGSNVG), 268–288 (LGAWLMLTCFQTSVISSSMFL), 317–337 (AAFVPGLVSLIVVPLLLYVVY), 367–387 (IMAVTLLLTVGLWVFGGKLGV), 388–408 (DAVTAAILGLSVLLITGVVTW), 423–443 (WFAALIAMAGYLNKYGLITWF), 450–470 (VVGGLGLSWQMSFGVLVLLYF), 490–510 (FLSVASALGTPPFLAAIVLSF), and 543–563 (YGFLISIVNLIIWLGVGGLWW).

It belongs to the SLC13A/DASS transporter (TC 2.A.47) family. DIT1 subfamily. In terms of assembly, monomer. The N-terminus is blocked. As to expression, expressed in leaves.

The protein resides in the plastid. Its subcellular location is the chloroplast inner membrane. Functionally, 2-oxoglutarate/malate translocator that transports carbon skeletons into chloroplasts for net glutamate synthesis. This translocator exchanges malate for internal succinate, fumarate and 2-oxoglutarate but not for aspartate and glutamate. Involved with DIT2 in primary ammonia assimilation and in the re-assimilation of ammonia generated by the photorespiratory pathway. Imports 2-oxoglutarate into plastids as precursor for ammonia assimilation. 2-oxoglutarate is converted to glutamate, the end product of ammonia assimilation, which is exported to the cytosol by DIT2. The chain is Dicarboxylate transporter 1, chloroplastic (DIT1) from Spinacia oleracea (Spinach).